A 288-amino-acid chain; its full sequence is Shikimate dehydrogenase (NADP(+)) (288 aa).

Shikimate contacts are provided by residues 15–17 and T64; that span reads SKS. Catalysis depends on K68, which acts as the Proton acceptor. E83 contributes to the NADP(+) binding site. Shikimate is bound by residues N92 and D117. NADP(+) contacts are provided by residues 141 to 145, 165 to 170, and M232; these read GAGGA and NRTVSK. Y234 is a shikimate binding site. NADP(+) is bound at residue G254.

Belongs to the shikimate dehydrogenase family. Homodimer.

It carries out the reaction shikimate + NADP(+) = 3-dehydroshikimate + NADPH + H(+). It functions in the pathway metabolic intermediate biosynthesis; chorismate biosynthesis; chorismate from D-erythrose 4-phosphate and phosphoenolpyruvate: step 4/7. Its function is as follows. Involved in the biosynthesis of the chorismate, which leads to the biosynthesis of aromatic amino acids. Catalyzes the reversible NADPH linked reduction of 3-dehydroshikimate (DHSA) to yield shikimate (SA). The chain is Shikimate dehydrogenase (NADP(+)) from Psychrobacter cryohalolentis (strain ATCC BAA-1226 / DSM 17306 / VKM B-2378 / K5).